The primary structure comprises 296 residues: Endonuclease 5 (296 aa).

The signal sequence occupies residues 1-20 (MRLWIVSVLVLTHLVHGALC). Residues Trp21 and His26 each coordinate a divalent metal cation. Position 21–26 (21–26 (WGKDGH)) interacts with substrate. A disulfide bond links Cys30 and Cys62. Asp66 and His81 together coordinate a divalent metal cation. Substrate is bound by residues 66-72 (DEIKKLS), 81-84 (HYVN), and 91-96 (NYEYCR). Disulfide bonds link Cys90-Cys243, Cys98-Cys108, and Cys223-Cys230. 2 residues coordinate substrate: Asn115 and Tyr133. N-linked (GlcNAc...) asparagine glycosylation is present at Asn115. A glycan (N-linked (GlcNAc...) asparagine) is linked at Asn134. A divalent metal cation-binding residues include His144, Asp148, and His154. The tract at residues 144–193 (HYMGDVHQPLHTGFLGDLGGNTIIVNWYHNKSNLHHVWDNMIIDSALETY) is substrate binding. The N-linked (GlcNAc...) asparagine glycan is linked to Asn173. Residues His178 and Asp182 each contribute to the a divalent metal cation site. N-linked (GlcNAc...) asparagine glycosylation is present at Asn195. Residues 281–296 (ATLNRIFSAKPKLAGL) constitute a propeptide, removed in mature form.

This sequence belongs to the nuclease type I family. Monomer. Requires Zn(2+) as cofactor.

The catalysed reaction is Endonucleolytic cleavage to 5'-phosphomononucleotide and 5'-phosphooligonucleotide end-products.. Hydrolyzes, with low efficiency, only single-stranded DNA and RNA without apparent specificity for bases. Endonuclease that recognizes and cleaves some mismatches with high efficiency, including heteroduplex double-stranded DNA; mostly efficient on T/G, A/G and G/G mismatches, less efficient for T/T and poorly efficient for C/C, A/A, T/C and A/C. This is Endonuclease 5 from Arabidopsis thaliana (Mouse-ear cress).